Consider the following 200-residue polypeptide: Probable GTP-binding protein EngB (200 aa).

The region spanning 26–200 (SIPEIAIAGR…IYEIAQCIKK (175 aa)) is the EngB-type G domain. GTP is bound by residues 34-41 (GRSNVGKS), 61-65 (GCTKQ), 80-83 (DLPG), 147-150 (TKID), and 176-179 (VISA). Mg(2+) contacts are provided by Ser-41 and Thr-63.

The protein belongs to the TRAFAC class TrmE-Era-EngA-EngB-Septin-like GTPase superfamily. EngB GTPase family. Requires Mg(2+) as cofactor.

Functionally, necessary for normal cell division and for the maintenance of normal septation. The polypeptide is Probable GTP-binding protein EngB (Ehrlichia canis (strain Jake)).